A 316-amino-acid chain; its full sequence is MKIILLYGGRSAEHDVSLLSAFSVVNAVYYNYYQVQLVMITRDGQWLKGSLLTEAPTSKEVLNLTDSAYQGTPIQPGEIKEEDAIVFPLLHGPNGEDGTIQGFLETIGMPYVGAGVLTSACGMDKIMTKYILQAAGIPQVPYVPVLKNYWKENPKKVFEQCEGSLLYPMFIKPANMGSSVGITKAENREELQNALQEAYRYDTRAIVEQGIEAREIEVAVLGNEDVRTTMPGEIVKDVAFYDYNSKYLDNKIEMQIPAQIPEETQAKAQEFAKKAYTMLGGSGLSRCDFFLTNKNELFLNELNTIPALQAEFCRYP.

The ATP-grasp domain occupies 129-316 (KYILQAAGIP…ALQAEFCRYP (188 aa)). 162–217 (EGSLLYPMFIKPANMGSSVGITKAENREELQNALQEAYRYDTRAIVEQGIEAREIE) is an ATP binding site. Residues aspartate 288, glutamate 301, and asparagine 303 each contribute to the Mg(2+) site.

The protein belongs to the D-alanine--D-alanine ligase family. Mg(2+) serves as cofactor. The cofactor is Mn(2+).

Its subcellular location is the cytoplasm. The enzyme catalyses 2 D-alanine + ATP = D-alanyl-D-alanine + ADP + phosphate + H(+). The protein operates within cell wall biogenesis; peptidoglycan biosynthesis. Its function is as follows. Cell wall formation. The protein is D-alanine--D-alanine ligase (ddl) of Enterococcus gallinarum.